The following is a 374-amino-acid chain: Glutamate 5-kinase (374 aa).

An ATP-binding site is contributed by Lys16. The substrate site is built by Ser56, Asp143, and Asn155. Residues 175 to 176 (TD) and 217 to 223 (SGGMLTK) each bind ATP. The PUA domain occupies 282–360 (RGALILDDGA…SNIGAILGYK (79 aa)).

The protein belongs to the glutamate 5-kinase family.

It localises to the cytoplasm. The catalysed reaction is L-glutamate + ATP = L-glutamyl 5-phosphate + ADP. Its pathway is amino-acid biosynthesis; L-proline biosynthesis; L-glutamate 5-semialdehyde from L-glutamate: step 1/2. In terms of biological role, catalyzes the transfer of a phosphate group to glutamate to form L-glutamate 5-phosphate. The chain is Glutamate 5-kinase from Marinomonas sp. (strain MWYL1).